Consider the following 56-residue polypeptide: Large ribosomal subunit protein bL32 (56 aa).

The disordered stretch occupies residues 1–21 (MAVQKNKPTRSKRGMRRSHDA). The span at 7 to 16 (KPTRSKRGMR) shows a compositional bias: basic residues.

The protein belongs to the bacterial ribosomal protein bL32 family.

The protein is Large ribosomal subunit protein bL32 of Hamiltonella defensa subsp. Acyrthosiphon pisum (strain 5AT).